Here is a 92-residue protein sequence, read N- to C-terminus: Integration host factor subunit beta (92 aa).

This sequence belongs to the bacterial histone-like protein family. As to quaternary structure, heterodimer of an alpha and a beta chain.

Its function is as follows. This protein is one of the two subunits of integration host factor, a specific DNA-binding protein that functions in genetic recombination as well as in transcriptional and translational control. In Vibrio cholerae serotype O1 (strain ATCC 39541 / Classical Ogawa 395 / O395), this protein is Integration host factor subunit beta.